Consider the following 534-residue polypeptide: MIWVVLMMAILLPQSLAHPGFFTSIGQMTDLIHNEKDLVTSLKDYIKAEEDKLEQIKKWAEKLDRLTSTATKDPEGFVGHPVNAFKLMKRLNTEWSELENLILKDMSDGFISNLTIQRQYFPNDEDQVGAAKALFRLQDTYNLDTNTISKGNLPGVQHKSFLTAEDCFELGKVAYTEADYYHTELWMEQALTQLEEGELSTVDKVSVLDYLSYAVYQQGDLDKALLLTKKLLELDPEHQRANGNLVYFEYIMSKEKDANKSASGDQSDQKTAPKKKGIAVDYLPERQKYEMLCRGEGIKMTPRRQKRLFCRYHDGNRNPKFILAPAKQEDEWDKPRIIRFHDIISDAEIEIVKDLAKPRLRRATISNPVTGALETVHYRISKSAWLSGYEDPVVSRINMRIQDLTGLDVSTAEELQVANYGVGGQYEPHFDFARKDEPDAFRELGTGNRIATWLFYMSDVSAGGATVFPEVGASVWPKKGTAVFWYNLFASGEGDYSTRHAACPVLVGNKWVSNKWLHERGQEFRRPCTLSELE.

Residues 1 to 17 form the signal peptide; it reads MIWVVLMMAILLPQSLA. N-linked (GlcNAc...) asparagine glycosylation is present at asparagine 113. A TPR repeat occupies 205–238; it reads VSVLDYLSYAVYQQGDLDKALLLTKKLLELDPEH. An N-linked (GlcNAc...) asparagine glycan is attached at asparagine 259. The Fe2OG dioxygenase domain maps to 411–519; that stretch reads TAEELQVANY…KWVSNKWLHE (109 aa). Fe cation contacts are provided by histidine 429, aspartate 431, and histidine 500. Lysine 510 is a binding site for 2-oxoglutarate.

Belongs to the P4HA family. As to quaternary structure, heterotetramer of two alpha-1 chains and two beta chains (P4HB)(the beta chain is the multi-functional PDI), where P4HB plays the role of a structural subunit; this tetramer catalyzes the formation of 4-hydroxyproline in collagen. It depends on Fe(2+) as a cofactor. Requires L-ascorbate as cofactor. As to expression, expressed at least in brain, heart and lung.

It is found in the endoplasmic reticulum lumen. It catalyses the reaction L-prolyl-[collagen] + 2-oxoglutarate + O2 = trans-4-hydroxy-L-prolyl-[collagen] + succinate + CO2. Its activity is regulated as follows. Inhibited by poly(L-proline). In terms of biological role, catalyzes the post-translational formation of 4-hydroxyproline in -Xaa-Pro-Gly- sequences in collagens and other proteins. The protein is Prolyl 4-hydroxylase subunit alpha-1 (P4ha1) of Mus musculus (Mouse).